We begin with the raw amino-acid sequence, 267 residues long: 4-hydroxy-tetrahydrodipicolinate reductase (267 aa).

Residues 9–14 (GAAGRM) and D35 contribute to the NAD(+) site. R36 provides a ligand contact to NADP(+). Residues 99 to 101 (GTT) and 123 to 126 (APNY) contribute to the NAD(+) site. H156 acts as the Proton donor/acceptor in catalysis. H157 provides a ligand contact to (S)-2,3,4,5-tetrahydrodipicolinate. K160 (proton donor) is an active-site residue. 166–167 (GT) is a binding site for (S)-2,3,4,5-tetrahydrodipicolinate.

It belongs to the DapB family.

The protein resides in the cytoplasm. The enzyme catalyses (S)-2,3,4,5-tetrahydrodipicolinate + NAD(+) + H2O = (2S,4S)-4-hydroxy-2,3,4,5-tetrahydrodipicolinate + NADH + H(+). The catalysed reaction is (S)-2,3,4,5-tetrahydrodipicolinate + NADP(+) + H2O = (2S,4S)-4-hydroxy-2,3,4,5-tetrahydrodipicolinate + NADPH + H(+). Its pathway is amino-acid biosynthesis; L-lysine biosynthesis via DAP pathway; (S)-tetrahydrodipicolinate from L-aspartate: step 4/4. Catalyzes the conversion of 4-hydroxy-tetrahydrodipicolinate (HTPA) to tetrahydrodipicolinate. This Alkalilimnicola ehrlichii (strain ATCC BAA-1101 / DSM 17681 / MLHE-1) protein is 4-hydroxy-tetrahydrodipicolinate reductase.